A 160-amino-acid chain; its full sequence is Small ribosomal subunit protein uS7 (160 aa).

This sequence belongs to the universal ribosomal protein uS7 family. As to quaternary structure, part of the 30S ribosomal subunit. Contacts proteins S9 and S11.

One of the primary rRNA binding proteins, it binds directly to 16S rRNA where it nucleates assembly of the head domain of the 30S subunit. Is located at the subunit interface close to the decoding center, probably blocks exit of the E-site tRNA. The chain is Small ribosomal subunit protein uS7 from Rickettsia conorii (strain ATCC VR-613 / Malish 7).